The following is a 400-amino-acid chain: Endoplasmin (400 aa).

Residue Lys-1 is modified to N6-succinyllysine. Asn-42 carries an N-linked (GlcNAc...) asparagine glycan. Ser-44 is modified (phosphoserine). Lys-76 is subject to N6-acetyllysine. 2 N-linked (GlcNAc...) asparagine glycosylation sites follow: Asn-78 and Asn-99. Residue Lys-230 is modified to N6-succinyllysine. The disordered stretch occupies residues 346–400 (IDPEAQVEEEPEEEPEDTTEDTEQDEEEEVDAGTEEEEEEEQETAKESTAEKDEL). Acidic residues predominate over residues 350–387 (AQVEEEPEEEPEDTTEDTEQDEEEEVDAGTEEEEEEEQ). At Thr-379 the chain carries Phosphothreonine. Over residues 388–400 (ETAKESTAEKDEL) the composition is skewed to basic and acidic residues. Residues 397 to 400 (KDEL) carry the Prevents secretion from ER motif.

This sequence belongs to the heat shock protein 90 family. As to quaternary structure, homodimer; disulfide-linked. Component of an EIF2 complex at least composed of CELF1/CUGBP1, CALR, CALR3, EIF2S1, EIF2S2, HSP90B1 and HSPA5. Part of a large chaperone multiprotein complex comprising DNAJB11, HSP90B1, HSPA5, HYOU, PDIA2, PDIA4, PDIA6, PPIB, SDF2L1, UGGT1 and very small amounts of ERP29, but not, or at very low levels, CALR nor CANX. Interacts with AIMP1; regulates its retention in the endoplasmic reticulum. Hyperglycosylated form interacts with OS9; promoting its degradation by the endoplasmic reticulum associated degradation (ERAD). Interacts with CNPY3. This interaction is disrupted in the presence of ATP. Interacts with TLR4 and TLR9, but not with TLR3. Interacts with MZB1 in a calcium-dependent manner. Interacts with METTL23. Interacts with IL1B; the interaction facilitates cargo translocation into the ERGIC. Interacts with EIF2AK3. Post-translationally, phosphorylated by CK2. In terms of processing, N-glycosylated cotranslationally at Asn-217 by STT3A-containing OST-A complex: this glycosylation is constitutive. In response to various stress, 5 additional facultative sites (Asn-62, Asn-107, Asn-445, Asn-481 and Asn-502) can be glycosylated post-translationally by STT3B-containing OST-B complex, leading to a hyperglycosylated form that is degraded by the ER-associated degradation (ERAD) pathway. In normal conditions, the OST-A complex together with CCDC134 prevent glycosylation at facultative sites during protein folding, thereby preventing hyperglycosylation. Mechanistically, nascent HSP90B1 is tethered during translation to a specialized CCDC134-containing translocon that forms a microenvironment for its folding, in which STT3A associates with the SRT pseudosubstrate motif, and prevents access to facultative glycosylation sites until folding is completed, rendering its facultative sites inaccessible to the OST-B complex.

The protein localises to the endoplasmic reticulum lumen. It localises to the sarcoplasmic reticulum lumen. Its subcellular location is the melanosome. It catalyses the reaction ATP + H2O = ADP + phosphate + H(+). In terms of biological role, ATP-dependent chaperone involved in the processing of proteins in the endoplasmic reticulum, regulating their transport. Together with MESD, acts as a modulator of the Wnt pathway by promoting the folding of LRP6, a coreceptor of the canonical Wnt pathway. When associated with CNPY3, required for proper folding of Toll-like receptors. Promotes folding and trafficking of TLR4 to the cell surface. May participate in the unfolding of cytosolic leaderless cargos (lacking the secretion signal sequence) such as the interleukin 1/IL-1 to facilitate their translocation into the ERGIC (endoplasmic reticulum-Golgi intermediate compartment) and secretion; the translocation process is mediated by the cargo receptor TMED10. The protein is Endoplasmin (HSP90B1) of Mesocricetus auratus (Golden hamster).